Reading from the N-terminus, the 117-residue chain is MLPAKMVTTAFELPGYRVSANLGVVRGITVRSRSLVGNFFGGLQSLFGGNITIYTSLCERARSETYAEMCQHAQALGADAVIGMRYDATEVMTGLTEVLCYGTAVKLEPLAGREPNP.

The protein belongs to the UPF0145 family.

The sequence is that of UPF0145 protein CV_4322 from Chromobacterium violaceum (strain ATCC 12472 / DSM 30191 / JCM 1249 / CCUG 213 / NBRC 12614 / NCIMB 9131 / NCTC 9757 / MK).